We begin with the raw amino-acid sequence, 101 residues long: Small ribosomal subunit protein bS18c (101 aa).

This sequence belongs to the bacterial ribosomal protein bS18 family. As to quaternary structure, part of the 30S ribosomal subunit.

Its subcellular location is the plastid. It localises to the chloroplast. This chain is Small ribosomal subunit protein bS18c, found in Populus alba (White poplar).